The chain runs to 200 residues: GTP cyclohydrolase 1 (200 aa).

Zn(2+)-binding residues include C87, H90, and C158.

Belongs to the GTP cyclohydrolase I family. In terms of assembly, toroid-shaped homodecamer, composed of two pentamers of five dimers.

The enzyme catalyses GTP + H2O = 7,8-dihydroneopterin 3'-triphosphate + formate + H(+). It participates in cofactor biosynthesis; 7,8-dihydroneopterin triphosphate biosynthesis; 7,8-dihydroneopterin triphosphate from GTP: step 1/1. The polypeptide is GTP cyclohydrolase 1 (Xanthomonas axonopodis pv. citri (strain 306)).